A 148-amino-acid chain; its full sequence is uncharacterized protein (148 aa).

The N-terminal stretch at 1–16 (MDVLFIALLVAPLILG) is a signal peptide. Asn50 is a glycosylation site (N-linked (GlcNAc...) asparagine). Residues 91-125 (MDPQNPVTTKPVTTEPVTTEPVTTEPQSPNQNDAM) are disordered. Residues 96-116 (PVTTKPVTTEPVTTEPVTTEP) are compositionally biased toward low complexity.

The protein localises to the secreted. This is an uncharacterized protein from Mus musculus (Mouse).